The sequence spans 427 residues: Serine--tRNA ligase (427 aa).

230-232 (TSE) serves as a coordination point for L-serine. 261–263 (RSE) contributes to the ATP binding site. An L-serine-binding site is contributed by E284. 348-351 (EISS) is a binding site for ATP. S384 serves as a coordination point for L-serine.

Belongs to the class-II aminoacyl-tRNA synthetase family. Type-1 seryl-tRNA synthetase subfamily. Homodimer. The tRNA molecule binds across the dimer.

It is found in the cytoplasm. It carries out the reaction tRNA(Ser) + L-serine + ATP = L-seryl-tRNA(Ser) + AMP + diphosphate + H(+). The enzyme catalyses tRNA(Sec) + L-serine + ATP = L-seryl-tRNA(Sec) + AMP + diphosphate + H(+). It functions in the pathway aminoacyl-tRNA biosynthesis; selenocysteinyl-tRNA(Sec) biosynthesis; L-seryl-tRNA(Sec) from L-serine and tRNA(Sec): step 1/1. In terms of biological role, catalyzes the attachment of serine to tRNA(Ser). Is also able to aminoacylate tRNA(Sec) with serine, to form the misacylated tRNA L-seryl-tRNA(Sec), which will be further converted into selenocysteinyl-tRNA(Sec). This chain is Serine--tRNA ligase, found in Desulforapulum autotrophicum (strain ATCC 43914 / DSM 3382 / VKM B-1955 / HRM2) (Desulfobacterium autotrophicum).